Consider the following 744-residue polypeptide: Collagen alpha-1(VIII) chain (744 aa).

A signal peptide spans 1-24 (MAVPPRPLQLLGILFIISLNSVRL). Residues 29–118 (AYYGIKPLPP…KGEVPLASLR (90 aa)) are nonhelical region (NC2). The span at 101 to 110 (KEVVPKKGKG) shows a compositional bias: basic and acidic residues. 3 disordered regions span residues 101 to 395 (KEVV…EPGL), 412 to 439 (GPKG…GFPG), and 457 to 590 (GPIG…DMGL). Positions 119-572 (GEQGPRGEPG…PGPPGPPGPP (454 aa)) are triple-helical region (COL1). Positions 129 to 138 (PRGPPGPPGL) are enriched in pro residues. Over residues 169–191 (KPGAMGMPGAKGEIGPKGEIGPM) the composition is skewed to low complexity. Over residues 204-218 (GLPGIGKPGGPGLPG) the composition is skewed to gly residues. The span at 298–307 (PQGLIGVPGV) shows a compositional bias: low complexity. Gly residues-rich tracts occupy residues 329–338 (GFPGGKGEQG) and 412–421 (GPKGEGGVVG). Low complexity-rich tracts occupy residues 470–507 (LPGL…VGPS) and 548–557 (PGALGPQGQP). A compositionally biased stretch (pro residues) spans 559–579 (LPGPPGPPGPPGPPAVMPTPS). Residues 573 to 744 (AVMPTPSPQG…SFSGYLLYPM (172 aa)) form a nonhelical region (NC1) region. A C1q domain is found at 611-744 (PAYEMPAFTA…SFSGYLLYPM (134 aa)).

As to quaternary structure, homotrimers, or heterotrimers in association with alpha 2(VIII) type collagens. Four homotrimers can form a tetrahedron stabilized by central interacting C-terminal NC1 trimers. Post-translationally, prolines at the third position of the tripeptide repeating unit (G-X-Y) are hydroxylated in some or all of the chains. Proteolytically cleaved by neutrophil elastase, in vitro. Proteolytic processing produces the C-terminal NC1 domain fragment, vastatin. As to expression, high levels in calvarium, eye and skin of newborn mice; also in various epithelial, endothelial and mesenchymal cells.

The protein localises to the secreted. The protein resides in the extracellular space. It localises to the extracellular matrix. It is found in the basement membrane. In terms of biological role, macromolecular component of the subendothelium. Major component of the Descemet's membrane (basement membrane) of corneal endothelial cells. Also a component of the endothelia of blood vessels. Necessary for migration and proliferation of vascular smooth muscle cells and thus, has a potential role in the maintenance of vessel wall integrity and structure, in particular in atherogenesis. Vastatin, the C-terminal fragment comprising the NC1 domain, inhibits aortic endothelial cell proliferation and causes cell apoptosis. In Mus musculus (Mouse), this protein is Collagen alpha-1(VIII) chain (Col8a1).